The following is a 380-amino-acid chain: Chaperone protein DnaJ (380 aa).

In terms of domain architecture, J spans 5-70; sequence DYYEVLGLQK…EKRAAYDQYG (66 aa). The segment at 136–214 adopts a CR-type zinc-finger fold; the sequence is GCKKDIRIST…CHGDGRVQKA (79 aa). Zn(2+) is bound by residues cysteine 149, cysteine 152, cysteine 166, cysteine 169, cysteine 188, cysteine 191, cysteine 202, and cysteine 205. CXXCXGXG motif repeat units follow at residues 149–156, 166–173, 188–195, and 202–209; these read CDTCHGSG, CSHCHGSG, CPSCHGSG, and CKSCHGDG.

This sequence belongs to the DnaJ family. In terms of assembly, homodimer. Zn(2+) serves as cofactor.

The protein localises to the cytoplasm. Its function is as follows. Participates actively in the response to hyperosmotic and heat shock by preventing the aggregation of stress-denatured proteins and by disaggregating proteins, also in an autonomous, DnaK-independent fashion. Unfolded proteins bind initially to DnaJ; upon interaction with the DnaJ-bound protein, DnaK hydrolyzes its bound ATP, resulting in the formation of a stable complex. GrpE releases ADP from DnaK; ATP binding to DnaK triggers the release of the substrate protein, thus completing the reaction cycle. Several rounds of ATP-dependent interactions between DnaJ, DnaK and GrpE are required for fully efficient folding. Also involved, together with DnaK and GrpE, in the DNA replication of plasmids through activation of initiation proteins. The chain is Chaperone protein DnaJ from Actinobacillus pleuropneumoniae serotype 5b (strain L20).